The primary structure comprises 379 residues: NADH-quinone oxidoreductase subunit D 1 (379 aa).

Belongs to the complex I 49 kDa subunit family. As to quaternary structure, NDH-1 is composed of 14 different subunits. Subunits NuoB, C, D, E, F, and G constitute the peripheral sector of the complex.

Its subcellular location is the cell inner membrane. It catalyses the reaction a quinone + NADH + 5 H(+)(in) = a quinol + NAD(+) + 4 H(+)(out). NDH-1 shuttles electrons from NADH, via FMN and iron-sulfur (Fe-S) centers, to quinones in the respiratory chain. The immediate electron acceptor for the enzyme in this species is believed to be ubiquinone. Couples the redox reaction to proton translocation (for every two electrons transferred, four hydrogen ions are translocated across the cytoplasmic membrane), and thus conserves the redox energy in a proton gradient. The polypeptide is NADH-quinone oxidoreductase subunit D 1 (Anaeromyxobacter sp. (strain K)).